The primary structure comprises 468 residues: 6-phosphogluconate dehydrogenase, decarboxylating (468 aa).

NADP(+)-binding positions include 10–15, 33–35, 74–76, and Asn-102; these read GMAVMG, NRS, and VKA. Residues Asn-102 and 128 to 130 contribute to the substrate site; that span reads SGG. Lys-183 functions as the Proton acceptor in the catalytic mechanism. Residue 186 to 187 participates in substrate binding; it reads HN. Glu-190 (proton donor) is an active-site residue. The substrate site is built by Tyr-191, Lys-260, Arg-287, Arg-445, and His-451.

Belongs to the 6-phosphogluconate dehydrogenase family. In terms of assembly, homodimer.

It catalyses the reaction 6-phospho-D-gluconate + NADP(+) = D-ribulose 5-phosphate + CO2 + NADPH. It participates in carbohydrate degradation; pentose phosphate pathway; D-ribulose 5-phosphate from D-glucose 6-phosphate (oxidative stage): step 3/3. Catalyzes the oxidative decarboxylation of 6-phosphogluconate to ribulose 5-phosphate and CO(2), with concomitant reduction of NADP to NADPH. The chain is 6-phosphogluconate dehydrogenase, decarboxylating (gnd) from Shigella flexneri.